Reading from the N-terminus, the 334-residue chain is Spermatogenesis-associated protein 32 (334 aa).

The segment at 24–98 (SDHHRHHHHH…TESPEQQNYR (75 aa)) is disordered. Positions 37–47 (ENEDEDTEVEA) are enriched in acidic residues. The span at 48 to 60 (ELPRTEPPPKVDP) shows a compositional bias: basic and acidic residues. Residues 77 to 98 (SKTTPETEGDSYTESPEQQNYR) are compositionally biased toward polar residues. A phosphoserine mark is found at Ser135 and Ser138.

As to quaternary structure, interacts with syntaxin-1 and ACTB. In terms of tissue distribution, highly expressed in the testis and weakly in the brain and heart.

This chain is Spermatogenesis-associated protein 32 (Spata32), found in Mus musculus (Mouse).